The following is a 184-amino-acid chain: uncharacterized protein (184 aa).

This is an uncharacterized protein from Methanocaldococcus jannaschii (strain ATCC 43067 / DSM 2661 / JAL-1 / JCM 10045 / NBRC 100440) (Methanococcus jannaschii).